A 373-amino-acid polypeptide reads, in one-letter code: Glutamate 5-kinase (373 aa).

K15 is an ATP binding site. Residues S54, D141, and N153 each coordinate substrate. ATP is bound by residues 173–174 (SD) and 215–221 (TGGMATK). A PUA domain is found at 280–358 (RGKLLVDEGA…SEIEVVLGYK (79 aa)).

This sequence belongs to the glutamate 5-kinase family.

It localises to the cytoplasm. It carries out the reaction L-glutamate + ATP = L-glutamyl 5-phosphate + ADP. Its pathway is amino-acid biosynthesis; L-proline biosynthesis; L-glutamate 5-semialdehyde from L-glutamate: step 1/2. Functionally, catalyzes the transfer of a phosphate group to glutamate to form L-glutamate 5-phosphate. This Syntrophotalea carbinolica (strain DSM 2380 / NBRC 103641 / GraBd1) (Pelobacter carbinolicus) protein is Glutamate 5-kinase.